Consider the following 264-residue polypeptide: Triosephosphate isomerase (264 aa).

Position 12–14 (12–14 (NWK)) interacts with substrate. The active-site Electrophile is histidine 104. Glutamate 176 serves as the catalytic Proton acceptor. Residues glycine 182, serine 222, and 243-244 (GG) each bind substrate.

It belongs to the triosephosphate isomerase family. In terms of assembly, homodimer.

The protein resides in the cytoplasm. It catalyses the reaction D-glyceraldehyde 3-phosphate = dihydroxyacetone phosphate. It participates in carbohydrate biosynthesis; gluconeogenesis. It functions in the pathway carbohydrate degradation; glycolysis; D-glyceraldehyde 3-phosphate from glycerone phosphate: step 1/1. Functionally, involved in the gluconeogenesis. Catalyzes stereospecifically the conversion of dihydroxyacetone phosphate (DHAP) to D-glyceraldehyde-3-phosphate (G3P). This is Triosephosphate isomerase from Bifidobacterium adolescentis (strain ATCC 15703 / DSM 20083 / NCTC 11814 / E194a).